Here is a 446-residue protein sequence, read N- to C-terminus: N-succinylarginine dihydrolase (446 aa).

Residues 19 to 28, Asn110, and 137 to 138 contribute to the substrate site; these read AGLSFGNVAS and HR. Glu174 is an active-site residue. Substrate is bound at residue Arg213. His249 is an active-site residue. Positions 251 and 364 each coordinate substrate. The active-site Nucleophile is the Cys370.

It belongs to the succinylarginine dihydrolase family. As to quaternary structure, homodimer.

It catalyses the reaction N(2)-succinyl-L-arginine + 2 H2O + 2 H(+) = N(2)-succinyl-L-ornithine + 2 NH4(+) + CO2. It participates in amino-acid degradation; L-arginine degradation via AST pathway; L-glutamate and succinate from L-arginine: step 2/5. Its function is as follows. Catalyzes the hydrolysis of N(2)-succinylarginine into N(2)-succinylornithine, ammonia and CO(2). The chain is N-succinylarginine dihydrolase from Paraburkholderia xenovorans (strain LB400).